A 598-amino-acid chain; its full sequence is Elongation factor 4 (598 aa).

The tr-type G domain maps to 4 to 181 (KKIRNFAIIA…AIVNLIPPPQ (178 aa)). GTP is bound by residues 16–21 (DHGKST) and 128–131 (NKID).

It belongs to the TRAFAC class translation factor GTPase superfamily. Classic translation factor GTPase family. LepA subfamily.

It localises to the cell membrane. It carries out the reaction GTP + H2O = GDP + phosphate + H(+). Required for accurate and efficient protein synthesis under certain stress conditions. May act as a fidelity factor of the translation reaction, by catalyzing a one-codon backward translocation of tRNAs on improperly translocated ribosomes. Back-translocation proceeds from a post-translocation (POST) complex to a pre-translocation (PRE) complex, thus giving elongation factor G a second chance to translocate the tRNAs correctly. Binds to ribosomes in a GTP-dependent manner. This is Elongation factor 4 from Mesomycoplasma hyopneumoniae (strain J / ATCC 25934 / NCTC 10110) (Mycoplasma hyopneumoniae).